The following is a 197-amino-acid chain: Phosphoheptose isomerase (197 aa).

One can recognise an SIS domain in the interval 34-196; sequence MVQCLLGGNK…DRTLFPQDEQ (163 aa). 49-51 lines the substrate pocket; that stretch reads NGG. Zn(2+) contacts are provided by histidine 58 and glutamate 62. Substrate is bound by residues glutamate 62, 91–92, 117–119, serine 122, and glutamine 172; these read ND and STS. Zn(2+)-binding residues include glutamine 172 and histidine 180.

The protein belongs to the SIS family. GmhA subfamily. As to quaternary structure, homotetramer. The cofactor is Zn(2+).

Its subcellular location is the cytoplasm. The catalysed reaction is 2 D-sedoheptulose 7-phosphate = D-glycero-alpha-D-manno-heptose 7-phosphate + D-glycero-beta-D-manno-heptose 7-phosphate. Its pathway is carbohydrate biosynthesis; D-glycero-D-manno-heptose 7-phosphate biosynthesis; D-glycero-alpha-D-manno-heptose 7-phosphate and D-glycero-beta-D-manno-heptose 7-phosphate from sedoheptulose 7-phosphate: step 1/1. In terms of biological role, catalyzes the isomerization of sedoheptulose 7-phosphate in D-glycero-D-manno-heptose 7-phosphate. This chain is Phosphoheptose isomerase, found in Shewanella frigidimarina (strain NCIMB 400).